We begin with the raw amino-acid sequence, 1229 residues long: Membrane-anchored lipid-binding protein SIP3 (1229 aa).

At 1–1066 (MSVHGRDPKK…AEKFSRINRM (1066 aa)) the chain is on the cytoplasmic side. The PH domain occupies 309-423 (SPEKSGWLYM…WLIAFEATKK (115 aa)). Residues 771–976 (EYSITYNHEY…VLRYYLEKIG (206 aa)) enclose the VASt domain. Residues 1067–1087 (MVVGLLASIMINILLSEKASV) traverse the membrane as a helical segment. Residues 1088 to 1229 (PYWSIKRAEK…ELEKLRPPIT (142 aa)) are Lumenal-facing. N-linked (GlcNAc...) asparagine glycosylation occurs at Asn1206.

This sequence belongs to the SIP3 family. As to quaternary structure, interacts with SNF1.

It is found in the endoplasmic reticulum membrane. Its function is as follows. May be involved in sterol transfer between intracellular membranes. The sequence is that of Membrane-anchored lipid-binding protein SIP3 from Saccharomyces cerevisiae (strain ATCC 204508 / S288c) (Baker's yeast).